The chain runs to 224 residues: Phosphoribosylformylglycinamidine synthase subunit PurQ (224 aa).

In terms of domain architecture, Glutamine amidotransferase type-1 spans 2–224; it reads TVAVVRFGGS…DGQGILGAFA (223 aa). The Nucleophile role is filled by C85. Active-site residues include H202 and E204.

Part of the FGAM synthase complex composed of 1 PurL, 1 PurQ and 2 PurS subunits.

Its subcellular location is the cytoplasm. The enzyme catalyses N(2)-formyl-N(1)-(5-phospho-beta-D-ribosyl)glycinamide + L-glutamine + ATP + H2O = 2-formamido-N(1)-(5-O-phospho-beta-D-ribosyl)acetamidine + L-glutamate + ADP + phosphate + H(+). The catalysed reaction is L-glutamine + H2O = L-glutamate + NH4(+). It participates in purine metabolism; IMP biosynthesis via de novo pathway; 5-amino-1-(5-phospho-D-ribosyl)imidazole from N(2)-formyl-N(1)-(5-phospho-D-ribosyl)glycinamide: step 1/2. Part of the phosphoribosylformylglycinamidine synthase complex involved in the purines biosynthetic pathway. Catalyzes the ATP-dependent conversion of formylglycinamide ribonucleotide (FGAR) and glutamine to yield formylglycinamidine ribonucleotide (FGAM) and glutamate. The FGAM synthase complex is composed of three subunits. PurQ produces an ammonia molecule by converting glutamine to glutamate. PurL transfers the ammonia molecule to FGAR to form FGAM in an ATP-dependent manner. PurS interacts with PurQ and PurL and is thought to assist in the transfer of the ammonia molecule from PurQ to PurL. In Halobacterium salinarum (strain ATCC 700922 / JCM 11081 / NRC-1) (Halobacterium halobium), this protein is Phosphoribosylformylglycinamidine synthase subunit PurQ.